The primary structure comprises 231 residues: Cell cycle transcriptional regulator CtrA (231 aa).

The region spanning 2–116 (RVLLIEDDSA…EMIARIHAVV (115 aa)) is the Response regulatory domain. At Asp51 the chain carries 4-aspartylphosphate. The ompR/PhoB-type DNA-binding region spans 124–223 (QSVIKTGDIV…VWGRGYVLRD (100 aa)).

In terms of processing, phosphorylated by CckA.

Functionally, forms part of a two-component regulatory system CtrA/CckA that controls multiple events in the cell cycle, including cell division, stalk synthesis and cell cycle-specific transcription. Binds to a group of cell cycle-regulated promoters critical for DNA replication, DNA methylation, and class II flagellar biogenesis. The chain is Cell cycle transcriptional regulator CtrA (ctrA) from Caulobacter vibrioides (strain ATCC 19089 / CIP 103742 / CB 15) (Caulobacter crescentus).